We begin with the raw amino-acid sequence, 210 residues long: SAP domain-containing ribonucleoprotein (210 aa).

At Ala-2 the chain carries N-acetylalanine. Residues 8–42 (LHKLKLAELKQECLARGLETKGIKQDLIHRLQAYL) form the SAP domain. The residue at position 10 (Lys-10) is an N6-acetyllysine. Residues 45 to 64 (HAEEEANEEDVLGDETEEEE) show a composition bias toward acidic residues. Residues 45–86 (HAEEEANEEDVLGDETEEEETKPIELPVKEEEPPEKTVDVAA) form a disordered region. Basic and acidic residues predominate over residues 65 to 86 (TKPIELPVKEEEPPEKTVDVAA). N6-acetyllysine is present on Lys-142. The interval 161 to 210 (VSSISRKSEDDEKLKKRKERFGIVTSSAGTGTTEDTEAKKRKRAERFGIA) is disordered. Phosphoserine is present on Ser-163. Residues 184–193 (VTSSAGTGTT) are compositionally biased toward polar residues.

The protein belongs to the SAP domain-containing ribonucleoprotein family. As to quaternary structure, interacts with DDX39A. Interacts with FUS. Interacts (via the C-terminal domain) with DDX39B; the interaction is direct and facilitates RNA binding of DDX39B. Component of the transcription/export (TREX) complex at least composed of ALYREF/THOC4, DDX39B, SARNP/CIP29, CHTOP and the THO subcomplex; TREX seems to have dynamic structure involving ATP-dependent remodeling; in the complex interacts directly with DDX39B in a ATP-dependent manner which bridges it to ALYREF/THOC4. In terms of tissue distribution, low expression in spleen, liver, pancreas, testis, thymus, heart, and kidney. Increased levels are seen in hepatocellular carcinoma and pancreatic adenocarcinoma.

The protein resides in the nucleus. Its subcellular location is the nucleus speckle. Binds both single-stranded and double-stranded DNA with higher affinity for the single-stranded form. Specifically binds to scaffold/matrix attachment region DNA. Also binds single-stranded RNA. Enhances RNA unwinding activity of DDX39A. May participate in important transcriptional or translational control of cell growth, metabolism and carcinogenesis. Component of the TREX complex which is thought to couple mRNA transcription, processing and nuclear export, and specifically associates with spliced mRNA and not with unspliced pre-mRNA. The TREX complex is recruited to spliced mRNAs by a transcription-independent mechanism, binds to mRNA upstream of the exon-junction complex (EJC) and is recruited in a splicing- and cap-dependent manner to a region near the 5' end of the mRNA where it functions in mRNA export to the cytoplasm via the TAP/NXF1 pathway. Associates with DDX39B, which facilitates RNA binding of DDX39B and likely plays a role in mRNA export. The polypeptide is SAP domain-containing ribonucleoprotein (SARNP) (Homo sapiens (Human)).